Reading from the N-terminus, the 312-residue chain is MLCRLPGPSTSRGEKEMGNSMKSTPAPLERPLSNTEGLESDFLAVLNDYPSPDISPPIFRRGEKLRVISDEGGWWKAISLSTGRESYIPGICVARVYHGWLFEGLGRDKAEELLQLPDTKIGSFMIRESETKKGFYSLSVRHRQVKHYRIFRLPNNWYYISPRLTFQCLEDLVTHYSEVADGLCCVLTTPCLAQNTPAPTAQPSPCTSPGSPVTLRQKTFDWKRVSSLQEGPEGAENPLRVDESLFSYGLRESIASYLSLTGDDSSNFDRKKKSLSLIYSGSKRKSSFFSAPNTLKINALAGTQKTKALTAT.

Positions 1–33 are disordered; it reads MLCRLPGPSTSRGEKEMGNSMKSTPAPLERPLS. An SH3 domain is found at 38–98; the sequence is LESDFLAVLN…PGICVARVYH (61 aa). An SH2 domain is found at 100–191; the sequence is WLFEGLGRDK…GLCCVLTTPC (92 aa). Positions 206–312 are SLA C-terminal; the sequence is CTSPGSPVTL…TQKTKALTAT (107 aa). The residue at position 274 (serine 274) is a Phosphoserine.

In terms of assembly, homodimer. Interacts with phosphorylated CBL, SYK and LAT. Homodimerization and interaction with phosphorylated CBL occurs via its C-terminal domain. Interacts with PDGFRB and EPHA2. Interacts with phosphorylated proteins ZAP70; CD3Z; VAV1 and LCP2 via its SH2 domain. Post-translationally, phosphorylated.

The protein localises to the cytoplasm. Its subcellular location is the endosome. Its function is as follows. Adapter protein, which negatively regulates T-cell receptor (TCR) signaling. Inhibits T-cell antigen-receptor induced activation of nuclear factor of activated T-cells. Involved in the negative regulation of positive selection and mitosis of T-cells. May act by linking signaling proteins such as ZAP70 with CBL, leading to a CBL dependent degradation of signaling proteins. This chain is Src-like-adapter (Sla), found in Rattus norvegicus (Rat).